Reading from the N-terminus, the 321-residue chain is Probable GDP-L-fucose synthase (321 aa).

8-14 (GGTGLVG) is a binding site for NADP(+). Residue Y136 is the Proton donor/acceptor of the active site. NADP(+) is bound by residues K140, 163–166 (PCNI), and H179. 3 residues coordinate substrate: R187, R215, and D277.

Belongs to the NAD(P)-dependent epimerase/dehydratase family. Fucose synthase subfamily. As to quaternary structure, homodimer.

The enzyme catalyses GDP-beta-L-fucose + NADP(+) = GDP-4-dehydro-alpha-D-rhamnose + NADPH + H(+). It participates in nucleotide-sugar biosynthesis; GDP-L-fucose biosynthesis via de novo pathway; GDP-L-fucose from GDP-alpha-D-mannose: step 2/2. Its function is as follows. Catalyzes the two-step NADP-dependent conversion of GDP-4-dehydro-6-deoxy-D-mannose to GDP-fucose, involving an epimerase and a reductase reaction. The polypeptide is Probable GDP-L-fucose synthase (Gmer) (Drosophila melanogaster (Fruit fly)).